A 207-amino-acid chain; its full sequence is uncharacterized protein (207 aa).

This is an uncharacterized protein from Rhizobium meliloti (Ensifer meliloti).